We begin with the raw amino-acid sequence, 281 residues long: Glycerol uptake facilitator protein (281 aa).

At 1–5 the chain is on the cytoplasmic side; sequence MSQTS. The chain crosses the membrane as a helical span at residues 6 to 34; it reads TLKGQCIAEFLGTGLLIFFGVGCVAALKV. The Periplasmic segment spans residues 35-39; the sequence is AGASF. Residues 40 to 60 traverse the membrane as a helical segment; the sequence is GQWEISVIWGLGVAMAIYLTA. The Cytoplasmic segment spans residues 61–63; that stretch reads GVS. The stretch at 64–67 is an intramembrane region; it reads GAHL. The short motif at 68-70 is the NPA 1 element; it reads NPA. Residues 68 to 78 constitute an intramembrane region (helical); it reads NPAVTIALWLF. Residues 79-84 lie on the Cytoplasmic side of the membrane; the sequence is ACFDKR. A helical membrane pass occupies residues 85-108; it reads KVIPFIVSQVAGAFCAAALVYGLY. Residues 109–143 lie on the Periplasmic side of the membrane; it reads YNLFFDFEQTHHIVRGSVESVDLAGTFSTYPNPHI. Residues 144-169 form a helical membrane-spanning segment; the sequence is NFVQAFAVEMVITAILMGLILALTDD. Residues 170–177 are Cytoplasmic-facing; it reads GNGVPRGP. A helical transmembrane segment spans residues 178–194; that stretch reads LAPLLIGLLIAVIGASM. At 195–198 the chain is on the periplasmic side; sequence GPLT. Residues 199–202 lie within the membrane without spanning it; sequence GFAM. Positions 203 to 205 match the NPA 2 motif; the sequence is NPA. The segment at residues 203–216 is an intramembrane region (helical); it reads NPARDFGPKVFAWL. Residues 217–231 lie on the Periplasmic side of the membrane; that stretch reads AGWGNVAFTGGRDIP. The helical transmembrane segment at 232–254 threads the bilayer; the sequence is YFLVPLFGPIVGAIVGAFAYRKL. Over 255–281 the chain is Cytoplasmic; that stretch reads IGRHLPCDICVVEEKETTTPSEQKASL.

It belongs to the MIP/aquaporin (TC 1.A.8) family. In terms of assembly, homotetramer.

It is found in the cell inner membrane. The catalysed reaction is glycerol(in) = glycerol(out). Functionally, mediates glycerol diffusion across the cytoplasmic membrane via a pore-type mechanism. The chain is Glycerol uptake facilitator protein (glpF) from Escherichia coli O157:H7.